A 397-amino-acid polypeptide reads, in one-letter code: Mannonate dehydratase (397 aa).

Belongs to the mannonate dehydratase family. The cofactor is Fe(2+). It depends on Mn(2+) as a cofactor.

The catalysed reaction is D-mannonate = 2-dehydro-3-deoxy-D-gluconate + H2O. Its pathway is carbohydrate metabolism; pentose and glucuronate interconversion. Functionally, catalyzes the dehydration of D-mannonate. In Yersinia pestis bv. Antiqua (strain Angola), this protein is Mannonate dehydratase.